A 780-amino-acid polypeptide reads, in one-letter code: Oocyte zinc finger protein XlCOF8.4 (780 aa).

15 C2H2-type zinc fingers span residues 250 to 272 (FPCS…RRTH), 278 to 300 (FSCS…HRTH), 306 to 328 (FSCS…QKTH), 334 to 356 (FPCS…RRTH), 362 to 384 (YSCS…RRTH), 390 to 412 (YSCS…RRTH), 418 to 440 (YSCS…WKTH), 446 to 468 (FSCV…YRTH), 474 to 496 (FSCF…LKIH), 618 to 640 (LSCS…QKTH), 646 to 668 (FSCS…RRTH), 674 to 696 (YSCS…RRTH), 702 to 724 (YSCS…WRTH), 730 to 752 (FSCT…HRTH), and 758 to 780 (FSCS…FQLH).

It belongs to the krueppel C2H2-type zinc-finger protein family.

It localises to the nucleus. Functionally, may be involved in transcriptional regulation. The chain is Oocyte zinc finger protein XlCOF8.4 from Xenopus laevis (African clawed frog).